The sequence spans 465 residues: Sodium-dependent phosphate transport protein 1 (465 aa).

N-linked (GlcNAc...) asparagine glycosylation is found at Asn-39, Asn-47, and Asn-56. The next 10 membrane-spanning stretches (helical) occupy residues 79–99 (GLVL…VGYL), 117–137 (SVLS…VIVC), 176–196 (FVMG…LLGW), 199–219 (VFYI…ILLF), 260–280 (LPLW…NLLV), 299–319 (GLLS…AGQM), 337–357 (LFTT…LYLS), 363–383 (TVIF…GQLI), 399–419 (VTAL…GLIL), and 431–451 (FFLM…FAKG).

This sequence belongs to the major facilitator superfamily. Sodium/anion cotransporter family. In terms of assembly, interacts with PDZK1.

Its subcellular location is the apical cell membrane. The catalysed reaction is 3 Na(+)(out) + phosphate(out) = 3 Na(+)(in) + phosphate(in). It catalyses the reaction urate(out) = urate(in). Its function is as follows. Important for the resorption of phosphate by the kidney. May be involved in actively transporting phosphate into cells via Na(+) cotransport in the renal brush border membrane. Plays a role in urate transport in the kidney. The sequence is that of Sodium-dependent phosphate transport protein 1 (Slc17a1) from Rattus norvegicus (Rat).